A 119-amino-acid polypeptide reads, in one-letter code: Methylglyoxal synthase (119 aa).

The MGS-like domain maps to 1–119 (MKIALIAHDK…ESAKLIMADI (119 aa)). Residues H8, K12, 34–37 (TGTT), and 54–55 (SG) each bind substrate. Residue D60 is the Proton donor/acceptor of the active site. H87 serves as a coordination point for substrate.

Belongs to the methylglyoxal synthase family.

The catalysed reaction is dihydroxyacetone phosphate = methylglyoxal + phosphate. Its function is as follows. Catalyzes the formation of methylglyoxal from dihydroxyacetone phosphate. In Clostridium perfringens (strain 13 / Type A), this protein is Methylglyoxal synthase.